We begin with the raw amino-acid sequence, 941 residues long: Lysine-specific demethylase 7A (941 aa).

Residues 37–88 (PVYCVCRQPYDVNRFMIECDICKDWFHGSCVGVEEHHAVDIDLYHCPNCAVL) form a PHD-type zinc finger. A linker region spans residues 97-114 (RRNWHRHDYTEIDDGSKP). One can recognise a JmjC domain in the interval 230–386 (FSDTKMSELV…MQLRCYEMEK (157 aa)). Residue T279 participates in substrate binding. The Fe cation site is built by H282 and D284. K299 is a substrate binding site. H354 is a Fe cation binding site. Disordered regions lie at residues 597 to 633 (QSLYTADSENEEDKRRTKKAKMKIEESSGVEGVEHEE), 677 to 700 (TTEESESSGDEKKQEITSNFKEES), and 819 to 921 (QDLS…MATA). S604 is modified (phosphoserine). Basic and acidic residues-rich tracts occupy residues 618–633 (MKIEESSGVEGVEHEE) and 685–700 (GDEKKQEITSNFKEES). A compositionally biased stretch (polar residues) spans 834 to 876 (SEISQRVQSRNYVDSSGSSLQNGKYMQNSNLTSGACQISNGSL).

It belongs to the JHDM1 histone demethylase family. JHDM1D subfamily. The cofactor is Fe(2+).

The protein localises to the nucleus. The catalysed reaction is N(6),N(6)-dimethyl-L-lysyl(9)-[histone H3] + 2 2-oxoglutarate + 2 O2 = L-lysyl(9)-[histone H3] + 2 formaldehyde + 2 succinate + 2 CO2. It catalyses the reaction N(6),N(6)-dimethyl-L-lysyl(27)-[histone H3] + 2 2-oxoglutarate + 2 O2 = L-lysyl(27)-[histone H3] + 2 formaldehyde + 2 succinate + 2 CO2. The enzyme catalyses N(6),N(6)-dimethyl-L-lysyl(36)-[histone H3] + 2-oxoglutarate + O2 = N(6)-methyl-L-lysyl(36)-[histone H3] + formaldehyde + succinate + CO2. It carries out the reaction N(6)-methyl-L-lysyl(20)-[histone H4] + 2-oxoglutarate + O2 = L-lysyl(20)-[histone H4] + formaldehyde + succinate + CO2. Histone demethylase required for brain development. Specifically demethylates dimethylated 'Lys-9', 'Lys-27' and 'Lys-36' (H3K9me2, H3K27me2, H3K36me2, respectively) of histone H3 and monomethylated histone H4 'Lys-20' residue (H4K20Me1), thereby playing a central role in histone code. Specifically binds trimethylated 'Lys-4' of histone H3 (H3K4me3), affecting histone demethylase specificity: in presence of H3K4me3, it has no demethylase activity toward H3K9me2, while it has high activity toward H3K27me2. Demethylates H3K9me2 in absence of H3K4me3. Has activity toward H4K20Me1 only when nucleosome is used as a substrate and when not histone octamer is used as substrate. This is Lysine-specific demethylase 7A (KDM7A) from Homo sapiens (Human).